Consider the following 635-residue polypeptide: tRNA 5-methylaminomethyl-2-thiouridine biosynthesis bifunctional protein MnmC (635 aa).

The interval Met-1 to Leu-231 is tRNA (mnm(5)s(2)U34)-methyltransferase. Residues Ile-249–Asp-635 are FAD-dependent cmnm(5)s(2)U34 oxidoreductase.

In the N-terminal section; belongs to the methyltransferase superfamily. tRNA (mnm(5)s(2)U34)-methyltransferase family. It in the C-terminal section; belongs to the DAO family. Requires FAD as cofactor.

It localises to the cytoplasm. It carries out the reaction 5-aminomethyl-2-thiouridine(34) in tRNA + S-adenosyl-L-methionine = 5-methylaminomethyl-2-thiouridine(34) in tRNA + S-adenosyl-L-homocysteine + H(+). In terms of biological role, catalyzes the last two steps in the biosynthesis of 5-methylaminomethyl-2-thiouridine (mnm(5)s(2)U) at the wobble position (U34) in tRNA. Catalyzes the FAD-dependent demodification of cmnm(5)s(2)U34 to nm(5)s(2)U34, followed by the transfer of a methyl group from S-adenosyl-L-methionine to nm(5)s(2)U34, to form mnm(5)s(2)U34. The sequence is that of tRNA 5-methylaminomethyl-2-thiouridine biosynthesis bifunctional protein MnmC from Azoarcus sp. (strain BH72).